The chain runs to 452 residues: Tol-Pal system protein TolB (452 aa).

The N-terminal stretch at 1 to 31 (MCGVRRGMGVLLLFCAVALCAMPFVVRSVWG) is a signal peptide.

Belongs to the TolB family. In terms of assembly, the Tol-Pal system is composed of five core proteins: the inner membrane proteins TolA, TolQ and TolR, the periplasmic protein TolB and the outer membrane protein Pal. They form a network linking the inner and outer membranes and the peptidoglycan layer.

It localises to the periplasm. Functionally, part of the Tol-Pal system, which plays a role in outer membrane invagination during cell division and is important for maintaining outer membrane integrity. The protein is Tol-Pal system protein TolB of Syntrophus aciditrophicus (strain SB).